We begin with the raw amino-acid sequence, 63 residues long: MKASELRSKDAAELGKELESLLKAQFGLRMQKATQQLANTSQLRNVRRDIARVRTLLTQKAGK.

The protein belongs to the universal ribosomal protein uL29 family.

The sequence is that of Large ribosomal subunit protein uL29 from Bordetella avium (strain 197N).